Reading from the N-terminus, the 306-residue chain is Serine/threonine-protein phosphatase 2A catalytic subunit A (306 aa).

Mn(2+) is bound by residues Asp54, His56, Asp82, and Asn114. His115 (proton donor) is an active-site residue. Mn(2+) contacts are provided by His164 and His238. Position 306 is a leucine methyl ester (Leu306).

The protein belongs to the PPP phosphatase family. PP-2A subfamily. As to quaternary structure, PP2A consists of a trimeric holoenzyme, composed of a 37 kDa catalytic subunit (C subunit) and a 65 kDa constant regulatory subunit (A subunit), that associates with a variety of regulatory subunits (B subunit) such as phr2AB (B55) and psrA (B56 homolog). The trimer may partially dissociates into a core 'AC' dimer equally active compared to the trimer. Mn(2+) is required as a cofactor. Post-translationally, reversibly methyl esterified on Leu-306 by leucine carboxyl methyltransferase 1 (LCMT) and protein phosphatase methylesterase 1 (PPME1). Carboxyl methylation influences the affinity of the catalytic subunit for the different regulatory subunits, thereby modulating the PP2A holoenzyme's substrate specificity, enzyme activity and cellular localization.

It is found in the cytoplasm. The protein resides in the cytosol. It localises to the nucleus speckle. It carries out the reaction O-phospho-L-seryl-[protein] + H2O = L-seryl-[protein] + phosphate. The enzyme catalyses O-phospho-L-threonyl-[protein] + H2O = L-threonyl-[protein] + phosphate. Plays a role in activating the myosin contractile function. Dephosphorylates threonine at 'Thr-1823', 'Thr-1833' and 'Thr-2029' in the C-terminal tail region of myosin II heavy chain (mhcA). Drives the assembly of dephosphorylated myosin II filaments to allow myosin recruitment into the cytoskeleton. This is Serine/threonine-protein phosphatase 2A catalytic subunit A (pho2a) from Dictyostelium discoideum (Social amoeba).